Reading from the N-terminus, the 211-residue chain is Urease accessory protein UreG (211 aa).

Residue 13–20 (GPVGSGKT) coordinates GTP.

Belongs to the SIMIBI class G3E GTPase family. UreG subfamily. As to quaternary structure, homodimer. UreD, UreF and UreG form a complex that acts as a GTP-hydrolysis-dependent molecular chaperone, activating the urease apoprotein by helping to assemble the nickel containing metallocenter of UreC. The UreE protein probably delivers the nickel.

Its subcellular location is the cytoplasm. Its function is as follows. Facilitates the functional incorporation of the urease nickel metallocenter. This process requires GTP hydrolysis, probably effectuated by UreG. In Alkalilimnicola ehrlichii (strain ATCC BAA-1101 / DSM 17681 / MLHE-1), this protein is Urease accessory protein UreG.